The following is a 430-amino-acid chain: Adenylosuccinate synthetase (430 aa).

Residues 12–18 (GDEGKGK) and 40–42 (GHT) each bind GTP. Residue Asp13 is the Proton acceptor of the active site. Residues Asp13 and Gly40 each coordinate Mg(2+). IMP contacts are provided by residues 13-16 (DEGK), 38-41 (NAGH), Thr128, Arg142, Gln223, Thr238, and Arg302. His41 functions as the Proton donor in the catalytic mechanism. Position 298–304 (298–304 (TTTGRPR)) interacts with substrate. GTP-binding positions include Arg304, 330-332 (CID), and 412-414 (SVG).

Belongs to the adenylosuccinate synthetase family. Homodimer. It depends on Mg(2+) as a cofactor.

It is found in the cytoplasm. It catalyses the reaction IMP + L-aspartate + GTP = N(6)-(1,2-dicarboxyethyl)-AMP + GDP + phosphate + 2 H(+). Its pathway is purine metabolism; AMP biosynthesis via de novo pathway; AMP from IMP: step 1/2. In terms of biological role, plays an important role in the de novo pathway of purine nucleotide biosynthesis. Catalyzes the first committed step in the biosynthesis of AMP from IMP. The sequence is that of Adenylosuccinate synthetase from Streptococcus thermophilus (strain CNRZ 1066).